A 112-amino-acid chain; its full sequence is Integration host factor subunit alpha (112 aa).

This sequence belongs to the bacterial histone-like protein family. As to quaternary structure, heterodimer of an alpha and a beta chain.

Functionally, this protein is one of the two subunits of integration host factor, a specific DNA-binding protein that functions in genetic recombination as well as in transcriptional and translational control. The sequence is that of Integration host factor subunit alpha from Sinorhizobium medicae (strain WSM419) (Ensifer medicae).